Consider the following 3329-residue polypeptide: Breast cancer type 2 susceptibility protein homolog (3329 aa).

Positions Met-1–Pro-40 are interaction with PALB2. Disordered regions lie at residues Ser-37–Pro-69 and Glu-207–Ser-241. Phosphoserine occurs at positions 435 and 481. The disordered stretch occupies residues Pro-628–Phe-650. Positions Pro-628–Val-979 are interaction with NPM1. A Phosphoserine modification is found at Ser-735. Positions Glu-934–Lys-953 are enriched in basic and acidic residues. The segment at Glu-934 to Asn-965 is disordered. Polar residues predominate over residues Ser-954 to Asn-965. BRCA2 repeat units lie at residues Asn-981–Glu-1015 and Asn-1192–Asn-1226. Residues His-982–Glu-2035 are interaction with RAD51. A disordered region spans residues Asn-1296 to Ser-1340. A compositionally biased stretch (polar residues) spans Tyr-1303–Gly-1323. BRCA2 repeat units follow at residues Ile-1394–Asp-1428, Lys-1491–Tyr-1525, Thr-1623–Asp-1657, Pro-1924–Gly-1958, and Asn-2004–Leu-2038. At Ser-2048 the chain carries Phosphoserine. The tract at residues Asn-2073–Thr-2099 is disordered. Polar residues predominate over residues Ser-2074–Thr-2099. Positions Lys-2219–Ser-2285 are interaction with HSF2BP. An interaction with FANCD2 region spans residues Thr-2298 to Val-2466. Residues Phe-2361–His-2393 form a disordered region. The segment covering Lys-2377–His-2393 has biased composition (basic and acidic residues). The interval Met-2402–Glu-2753 is interaction with SEM1. The Nuclear export signal; masked by interaction with SEM1 signature appears at Ala-2603–Thr-2619. At Ser-3214 the chain carries Phosphoserine; by CDK1 and CDK2. 2 disordered regions span residues Phe-3221–Pro-3257 and Gln-3273–Ser-3329. Ser-3241 carries the phosphoserine modification. Residues Ser-3309 to Ser-3329 are compositionally biased toward basic and acidic residues.

In terms of assembly, monomer and dimer. Interacts with RAD51; regulates RAD51 recruitment and function at sites of DNA repair. Interacts with SEM1, WDR16, USP11, DMC1, ROCK2 and NPM1. Interacts with both nonubiquitinated and monoubiquitinated FANCD2; this complex also includes XRCC3 and phosphorylated FANCG. Part of a BRCA complex containing BRCA1, BRCA2 and PALB2. Component of the homologous recombination repair (HR) complex composed of ERCC5/XPG, BRCA2, PALB2, DSS1 and RAD51. Within the complex, interacts with ERCC5/XPG and PALB2. Interacts directly with PALB2 which may serve as a scaffold for a HR complex containing PALB2, BRCA2, RAD51C, RAD51 and XRCC3. Interacts with BRCA1 only in the presence of PALB2 which serves as the bridging protein. Interacts with POLH; the interaction is direct. Interacts with the TREX-2 complex subunits PCID2 and SEM1. Interacts with HSF2BP and BRME1; the interaction with HSF2BP is direct and allows the formation of a ternary complex. The complex BRME1:HSF2BP:BRCA2 interacts with SPATA22, MEIOB and RAD51. Phosphorylated by ATM upon irradiation-induced DNA damage. Phosphorylation by CHEK1 and CHEK2 regulates interaction with RAD51. Phosphorylation at Ser-3291 by CDK1 and CDK2 is low in S phase when recombination is active, but increases as cells progress towards mitosis; this phosphorylation prevents homologous recombination-dependent repair during S phase and G2 by inhibiting RAD51 binding. Post-translationally, ubiquitinated in the absence of DNA damage; this does not lead to proteasomal degradation. In contrast, ubiquitination in response to DNA damage leads to proteasomal degradation. In terms of tissue distribution, widely expressed. Highest expression in cerebellum, testis, ileum, appendix, epididymis, ovary and mammary gland. No expression in lung.

It localises to the nucleus. The protein resides in the cytoplasm. It is found in the cytoskeleton. The protein localises to the microtubule organizing center. Its subcellular location is the centrosome. In terms of biological role, involved in double-strand break repair and/or homologous recombination. Binds RAD51 and potentiates recombinational DNA repair by promoting assembly of RAD51 onto single-stranded DNA (ssDNA). Acts by targeting RAD51 to ssDNA over double-stranded DNA, enabling RAD51 to displace replication protein-A (RPA) from ssDNA and stabilizing RAD51-ssDNA filaments by blocking ATP hydrolysis. Part of a PALB2-scaffolded HR complex containing RAD51C and which is thought to play a role in DNA repair by HR. May participate in S phase checkpoint activation. Binds selectively to ssDNA, and to ssDNA in tailed duplexes and replication fork structures. May play a role in the extension step after strand invasion at replication-dependent DNA double-strand breaks; together with PALB2 is involved in both POLH localization at collapsed replication forks and DNA polymerization activity. In concert with NPM1, regulates centrosome duplication. Interacts with the TREX-2 complex (transcription and export complex 2) subunits PCID2 and SEM1, and is required to prevent R-loop-associated DNA damage and thus transcription-associated genomic instability, independently of its known role in homologous recombination. The protein is Breast cancer type 2 susceptibility protein homolog of Mus musculus (Mouse).